The chain runs to 295 residues: Outer surface protein B (295 aa).

An N-terminal signal peptide occupies residues 1-16; the sequence is MKQYLLGFTLVFALIA. A lipid anchor (N-palmitoyl cysteine) is attached at cysteine 17. The S-diacylglycerol cysteine moiety is linked to residue cysteine 17.

Its subcellular location is the cell outer membrane. The sequence is that of Outer surface protein B (ospB) from Borreliella burgdorferi (Lyme disease spirochete).